Reading from the N-terminus, the 143-residue chain is Small ribosomal subunit protein uS12B (143 aa).

P62 carries the 3,4-dihydroxyproline modification.

The protein belongs to the universal ribosomal protein uS12 family. Component of the small ribosomal subunit (SSU). Mature yeast ribosomes consist of a small (40S) and a large (60S) subunit. The 40S small subunit contains 1 molecule of ribosomal RNA (18S rRNA) and at least 33 different proteins. The large 60S subunit contains 3 rRNA molecules (25S, 5.8S and 5S rRNA) and at least 46 different proteins. In terms of processing, hydroxylation at Pro-62 affects translation termination efficiency.

It is found in the cytoplasm. The protein localises to the nucleus. The protein resides in the nucleolus. In terms of biological role, component of the ribosome, a large ribonucleoprotein complex responsible for the synthesis of proteins in the cell. The small ribosomal subunit (SSU) binds messenger RNAs (mRNAs) and translates the encoded message by selecting cognate aminoacyl-transfer RNA (tRNA) molecules. The large subunit (LSU) contains the ribosomal catalytic site termed the peptidyl transferase center (PTC), which catalyzes the formation of peptide bonds, thereby polymerizing the amino acids delivered by tRNAs into a polypeptide chain. The nascent polypeptides leave the ribosome through a tunnel in the LSU and interact with protein factors that function in enzymatic processing, targeting, and the membrane insertion of nascent chains at the exit of the ribosomal tunnel. This Schizosaccharomyces pombe (strain 972 / ATCC 24843) (Fission yeast) protein is Small ribosomal subunit protein uS12B (rps2302).